The sequence spans 466 residues: Flagellum-specific ATP synthase (466 aa).

ATP is bound at residue 194–201 (SSSGLGKS).

This sequence belongs to the ATPase alpha/beta chains family.

It is found in the cytoplasm. The catalysed reaction is ATP + H2O + 4 H(+)(in) = ADP + phosphate + 5 H(+)(out). Probable catalytic subunit of a protein translocase for flagellum-specific export, or a proton translocase involved in local circuits at the flagellum. May be involved in a specialized protein export pathway that proceeds without signal peptide cleavage. The protein is Flagellum-specific ATP synthase (fliI) of Buchnera aphidicola subsp. Schizaphis graminum (strain Sg).